A 399-amino-acid chain; its full sequence is CCA-adding enzyme (399 aa).

ATP is bound by residues G32 and R35. Residues G32 and R35 each coordinate CTP. Residues D45 and D47 each contribute to the Mg(2+) site. Residues R116, D159, R162, R165, and R168 each contribute to the ATP site. Residues R116, D159, R162, R165, and R168 each coordinate CTP.

It belongs to the tRNA nucleotidyltransferase/poly(A) polymerase family. Bacterial CCA-adding enzyme type 3 subfamily. In terms of assembly, homodimer. The cofactor is Mg(2+).

The catalysed reaction is a tRNA precursor + 2 CTP + ATP = a tRNA with a 3' CCA end + 3 diphosphate. The enzyme catalyses a tRNA with a 3' CCA end + 2 CTP + ATP = a tRNA with a 3' CCACCA end + 3 diphosphate. Catalyzes the addition and repair of the essential 3'-terminal CCA sequence in tRNAs without using a nucleic acid template. Adds these three nucleotides in the order of C, C, and A to the tRNA nucleotide-73, using CTP and ATP as substrates and producing inorganic pyrophosphate. tRNA 3'-terminal CCA addition is required both for tRNA processing and repair. Also involved in tRNA surveillance by mediating tandem CCA addition to generate a CCACCA at the 3' terminus of unstable tRNAs. While stable tRNAs receive only 3'-terminal CCA, unstable tRNAs are marked with CCACCA and rapidly degraded. This chain is CCA-adding enzyme, found in Streptococcus gordonii (strain Challis / ATCC 35105 / BCRC 15272 / CH1 / DL1 / V288).